The following is a 177-amino-acid chain: Large ribosomal subunit protein uL6 (177 aa).

This sequence belongs to the universal ribosomal protein uL6 family. Part of the 50S ribosomal subunit.

In terms of biological role, this protein binds to the 23S rRNA, and is important in its secondary structure. It is located near the subunit interface in the base of the L7/L12 stalk, and near the tRNA binding site of the peptidyltransferase center. The polypeptide is Large ribosomal subunit protein uL6 (Dichelobacter nodosus (strain VCS1703A)).